The primary structure comprises 393 residues: Small RNA 2'-O-methyltransferase (393 aa).

S-adenosyl-L-methionine-binding residues include Ser60, Asp78, and Ser114. 4 residues coordinate Mg(2+): Glu132, Glu135, His136, and His181. A disordered region spans residues 283–309 (RVSHLPRRKEQDGEQGDKPKDIGGSKA). Over residues 290–305 (RKEQDGEQGDKPKDIG) the composition is skewed to basic and acidic residues.

Belongs to the methyltransferase superfamily. HEN1 family. It depends on Mg(2+) as a cofactor.

It localises to the cytoplasm. The enzyme catalyses small RNA 3'-end nucleotide + S-adenosyl-L-methionine = small RNA 3'-end 2'-O-methylnucleotide + S-adenosyl-L-homocysteine + H(+). Functionally, methyltransferase that adds a 2'-O-methyl group at the 3'-end of piRNAs, a class of 24 to 30 nucleotide RNAs that are generated by a Dicer-independent mechanism and are primarily derived from transposons and other repeated sequence elements. This probably protects the 3'-end of piRNAs from uridylation activity and subsequent degradation. Stabilization of piRNAs is essential for gametogenesis. The protein is Small RNA 2'-O-methyltransferase (HENMT1) of Macaca fascicularis (Crab-eating macaque).